A 496-amino-acid chain; its full sequence is Lysine--tRNA ligase (496 aa).

Mg(2+) is bound by residues Glu-403 and Glu-410.

Belongs to the class-II aminoacyl-tRNA synthetase family. As to quaternary structure, homodimer. The cofactor is Mg(2+).

The protein localises to the cytoplasm. The catalysed reaction is tRNA(Lys) + L-lysine + ATP = L-lysyl-tRNA(Lys) + AMP + diphosphate. The sequence is that of Lysine--tRNA ligase from Aster yellows witches'-broom phytoplasma (strain AYWB).